An 832-amino-acid polypeptide reads, in one-letter code: Sodium/hydrogen exchanger 3 (832 aa).

A signal peptide spans 1–29; that stretch reads MGRNRSGCVARCVSLTALVLLLCCPVVRS. Topologically, residues 30-66 are extracellular; that stretch reads SEAETDPDSHTEHGDSHGGSREGNDTGFQIVTFRWEH. A disordered region spans residues 31-51; it reads EAETDPDSHTEHGDSHGGSRE. The span at 36-51 shows a compositional bias: basic and acidic residues; sequence PDSHTEHGDSHGGSRE. The helical transmembrane segment at 67 to 89 threads the bilayer; that stretch reads VQTPYVIALWILVASLGKIVFHL. Over 90 to 97 the chain is Cytoplasmic; the sequence is SEKVTSVV. The helical transmembrane segment at 98–117 threads the bilayer; sequence PESALLIVLGLILGGIVWAA. The Extracellular segment spans residues 118–126; the sequence is DHSASFTLT. A helical membrane pass occupies residues 127-144; the sequence is PTVFFFYLLPPIVLDAGY. Over 145 to 147 the chain is Cytoplasmic; sequence FMP. The helical transmembrane segment at 148–183 threads the bilayer; it reads NRHFFGNLGTILTYAVIGTVWNAATTGLSLYGVFLL. Positions 153, 156, and 157 each coordinate a 1,2-diacyl-sn-glycero-3-phospho-(1D-myo-inositol). The Extracellular portion of the chain corresponds to 184–196; it reads GLMGDLKAGLLEF. The chain crosses the membrane as a helical span at residues 197–218; it reads LLFGSLIAAVDPVAVLAVFEEV. The Cytoplasmic portion of the chain corresponds to 219-220; it reads HV. A helical membrane pass occupies residues 221 to 252; the sequence is NEVLFIIVFGESLLNDAVTVVLYNVFNSFVEV. Residues 253 to 259 lie on the Extracellular side of the membrane; sequence GAGNVQG. Residues 260-294 traverse the membrane as a helical segment; sequence LDYFKGIVSFFVVSLGGTAVGIIFAFILSLVTRFT. Topologically, residues 295–296 are cytoplasmic; sequence KH. A helical membrane pass occupies residues 297 to 319; the sequence is VRVIEPGFVFVISYLSYLTADML. The Extracellular portion of the chain corresponds to 320–321; that stretch reads SL. The helical transmembrane segment at 322-338 threads the bilayer; it reads SAILAITFCGICCQKYV. The Cytoplasmic segment spans residues 339–345; sequence KANLCEQ. A helical transmembrane segment spans residues 346 to 374; the sequence is SITTVRYAMKMLASGAETIIFMFLGISAV. Residues 375 to 382 are Extracellular-facing; it reads NPTIWTWN. A helical membrane pass occupies residues 383–404; that stretch reads TAFILLTLVFISVYRVIGVVIQ. Over 405-417 the chain is Cytoplasmic; the sequence is TWILNHYRVVQLE. The chain crosses the membrane as a helical span at residues 418 to 441; sequence IIDQVVMSYGGLRGAVAFALVVLL. Residues 442–448 lie on the Extracellular side of the membrane; sequence DSNYVGE. The chain crosses the membrane as a helical span at residues 449–482; it reads RRLFVSTTIIVVYFTVIFQGLTIKPLVKWLKVKR. Topologically, residues 483 to 832 are cytoplasmic; it reads SQHKEPLLNE…PLSFLPESSM (350 aa). Positions 512, 513, and 515 each coordinate a 1,2-diacyl-sn-glycero-3-phospho-(1D-myo-inositol). Residues 740–760 are disordered; that stretch reads TPASNDADETGTGIDNPSFSN.

This sequence belongs to the monovalent cation:proton antiporter 1 (CPA1) transporter (TC 2.A.36) family. Homodimer. Detected in early distal renal tubules in the kidney bundle zone, in proximal and late distal tubules in the kidney sinus zone, in absorptive epithelial cells of the intestine and in rectal epithelium (at protein level). Isoform 1 is expressed strongly in the gills, at intermediate levels in the kidney, spleen, rectum, spiral intestine and skin, and weakly in the brain, blood and rectal gland. Isoform 2 is expressed strongly in the kidney, rectum and spiral intestine, and weakly in muscles and the rectal gland.

Its subcellular location is the apical cell membrane. It localises to the cell membrane. The protein localises to the recycling endosome membrane. It is found in the early endosome membrane. The catalysed reaction is Na(+)(in) + H(+)(out) = Na(+)(out) + H(+)(in). Its activity is regulated as follows. Seems to switch between active and inactive modes in response to various stimuli. Activated directly or indirectly by membrane phosphatidylinositol (PIs). Regulated by a variety of auxiliary proteins, which facilitate the maturation, cell surface expression and function of the transporter. Inhibited specifically by the drug tenapanor. In terms of biological role, plasma membrane Na(+)/H(+) antiporter. Exchanges intracellular H(+) ions for extracellular Na(+) in 1:1 stoichiometry, playing a key role in salt and fluid absorption and pH homeostasis. Major apical Na(+)/H(+) exchanger in kidney and intestine playing an important role in renal and intestine Na(+) absorption and blood pressure regulation. This is Sodium/hydrogen exchanger 3 from Triakis scyllium (Banded houndshark).